The chain runs to 199 residues: Dephospho-CoA kinase (199 aa).

A DPCK domain is found at 3–199 (KVGLTGGICS…DLLEFFTLYQ (197 aa)). Residue 11–16 (CSGKST) participates in ATP binding.

It belongs to the CoaE family.

Its subcellular location is the cytoplasm. The catalysed reaction is 3'-dephospho-CoA + ATP = ADP + CoA + H(+). Its pathway is cofactor biosynthesis; coenzyme A biosynthesis; CoA from (R)-pantothenate: step 5/5. Its function is as follows. Catalyzes the phosphorylation of the 3'-hydroxyl group of dephosphocoenzyme A to form coenzyme A. The sequence is that of Dephospho-CoA kinase from Clostridium perfringens (strain 13 / Type A).